The primary structure comprises 875 residues: Phosphatidylinositol 3-kinase VPS34 (875 aa).

Positions 14 to 188 constitute a C2 PI3K-type domain; that stretch reads LDVPLKVKIK…WLDEITISKL (175 aa). Residues 293–526 enclose the PIK helical domain; the sequence is LDKQVKPDIK…SSFWSRLDKK (234 aa). Residues 593-859 form the PI3K/PI4K catalytic domain; it reads CPETSKVFKS…LINDSVNALL (267 aa). Residues 599–605 form a G-loop region; the sequence is VFKSSLS. The catalytic loop stretch occupies residues 728–736; that stretch reads GVGDRHLDN. The segment at 747 to 768 is activation loop; it reads HADFGYILGQDPKPFPPLMKLP.

Belongs to the PI3/PI4-kinase family. Component of the autophagy-specific VPS34 PI3-kinase complex I composed of VPS15, VPS30, VPS34, ATG14 and ATG38, and of the VPS34 PI3-kinase complex II composed of VPS15, VPS30, VPS34 and VPS38. Interacts directly with ATG38. Interacts directly with VPS34. Post-translationally, autophosphorylated. Might also be phosphorylated by VPS15.

The protein resides in the golgi apparatus. Its subcellular location is the trans-Golgi network membrane. The protein localises to the endosome membrane. The catalysed reaction is a 1,2-diacyl-sn-glycero-3-phospho-(1D-myo-inositol) + ATP = a 1,2-diacyl-sn-glycero-3-phospho-(1D-myo-inositol-3-phosphate) + ADP + H(+). Phosphatidylinositol 3-kinase activity is directly dependent on VPS15 protein kinase activity. In terms of biological role, phosphatidylinositol 3-kinase required for cytoplasm to vacuole transport (Cvt) and autophagy as a part of the autophagy-specific VPS34 PI3-kinase complex I. This complex is essential to recruit the ATG8-phosphatidylinositol conjugate and the ATG12-ATG5 conjugate to the pre-autophagosomal structure. Also involved in endosome-to-Golgi retrograde transport as part of the VPS34 PI3-kinase complex II. This second complex is required for the endosome-to-Golgi retrieval of PEP1 and KEX2, and the recruitment of VPS5 and VPS7, two components of the retromer complex, to endosomal membranes (probably through the synthesis of a specific pool of phosphatidylinositol 3-phosphate recruiting the retromer to the endosomes). Its activation by VPS15 may lead to the phosphorylation of phosphatidylinositol in the sorting compartment membrane. Finally, it might also be involved in ethanol tolerance and cell wall integrity. In Saccharomyces cerevisiae (strain ATCC 204508 / S288c) (Baker's yeast), this protein is Phosphatidylinositol 3-kinase VPS34 (VPS34).